A 181-amino-acid chain; its full sequence is UPF0301 protein MXAN_2022 (181 aa).

The protein belongs to the UPF0301 (AlgH) family.

The chain is UPF0301 protein MXAN_2022 from Myxococcus xanthus (strain DK1622).